We begin with the raw amino-acid sequence, 425 residues long: Histidine--tRNA ligase (425 aa).

Belongs to the class-II aminoacyl-tRNA synthetase family. In terms of assembly, homodimer.

The protein resides in the cytoplasm. The catalysed reaction is tRNA(His) + L-histidine + ATP = L-histidyl-tRNA(His) + AMP + diphosphate + H(+). This chain is Histidine--tRNA ligase, found in Shewanella oneidensis (strain ATCC 700550 / JCM 31522 / CIP 106686 / LMG 19005 / NCIMB 14063 / MR-1).